The following is a 268-amino-acid chain: 3-methyl-2-oxobutanoate hydroxymethyltransferase (268 aa).

The Mg(2+) site is built by Asp46 and Asp85. 3-methyl-2-oxobutanoate-binding positions include 46–47, Asp85, and Lys115; that span reads DS. Glu117 is a binding site for Mg(2+). Catalysis depends on Glu184, which acts as the Proton acceptor.

It belongs to the PanB family. Homodecamer; pentamer of dimers. The cofactor is Mg(2+).

It localises to the cytoplasm. The catalysed reaction is 3-methyl-2-oxobutanoate + (6R)-5,10-methylene-5,6,7,8-tetrahydrofolate + H2O = 2-dehydropantoate + (6S)-5,6,7,8-tetrahydrofolate. The protein operates within cofactor biosynthesis; (R)-pantothenate biosynthesis; (R)-pantoate from 3-methyl-2-oxobutanoate: step 1/2. Its function is as follows. Catalyzes the reversible reaction in which hydroxymethyl group from 5,10-methylenetetrahydrofolate is transferred onto alpha-ketoisovalerate to form ketopantoate. The chain is 3-methyl-2-oxobutanoate hydroxymethyltransferase from Magnetococcus marinus (strain ATCC BAA-1437 / JCM 17883 / MC-1).